Here is a 384-residue protein sequence, read N- to C-terminus: Tryptophan--tRNA ligase (384 aa).

Positions 81 to 89 (PSGPMHIGH) match the 'HIGH' region motif. The 'KMSKS' region motif lies at 252–256 (KMSAS).

Belongs to the class-I aminoacyl-tRNA synthetase family.

It is found in the cytoplasm. The enzyme catalyses tRNA(Trp) + L-tryptophan + ATP = L-tryptophyl-tRNA(Trp) + AMP + diphosphate + H(+). This Thermococcus onnurineus (strain NA1) protein is Tryptophan--tRNA ligase.